A 49-amino-acid polypeptide reads, in one-letter code: uncharacterized protein (49 aa).

Residues 20–42 form a helical membrane-spanning segment; the sequence is LFLVGLTIGKMATSRILSFLGFI.

It is found in the membrane. This is an uncharacterized protein from Dictyostelium discoideum (Social amoeba).